The chain runs to 845 residues: Protein translocase subunit SecA 1 (845 aa).

Residues glutamine 91, 109 to 113 (GEGKT), and aspartate 498 contribute to the ATP site. Residues 795 to 845 (TDFGTAQHVSAEDGKEKAKKQPIVKGDKVGRNDPCPCGSGKKYKNCHGKEE) are disordered. Zn(2+)-binding residues include cysteine 829, cysteine 831, cysteine 840, and histidine 841. The segment covering 835–845 (KKYKNCHGKEE) has biased composition (basic residues).

Belongs to the SecA family. As to quaternary structure, monomer and homodimer. Part of the essential Sec protein translocation apparatus which comprises SecA, SecYEG and auxiliary proteins SecDF. Other proteins may also be involved. Zn(2+) serves as cofactor.

Its subcellular location is the cell membrane. The protein resides in the cytoplasm. It catalyses the reaction ATP + H2O + cellular proteinSide 1 = ADP + phosphate + cellular proteinSide 2.. Part of the Sec protein translocase complex. Interacts with the SecYEG preprotein conducting channel. Has a central role in coupling the hydrolysis of ATP to the transfer of proteins into and across the cell membrane, serving as an ATP-driven molecular motor driving the stepwise translocation of polypeptide chains across the membrane. In Staphylococcus haemolyticus (strain JCSC1435), this protein is Protein translocase subunit SecA 1.